Consider the following 602-residue polypeptide: Elongation factor 4 (602 aa).

A tr-type G domain is found at 6-188 (DHIRNFSIVA…AIVTQLPAPK (183 aa)). GTP-binding positions include 18–23 (DHGKST) and 135–138 (NKID).

The protein belongs to the TRAFAC class translation factor GTPase superfamily. Classic translation factor GTPase family. LepA subfamily.

It is found in the cell inner membrane. It carries out the reaction GTP + H2O = GDP + phosphate + H(+). In terms of biological role, required for accurate and efficient protein synthesis under certain stress conditions. May act as a fidelity factor of the translation reaction, by catalyzing a one-codon backward translocation of tRNAs on improperly translocated ribosomes. Back-translocation proceeds from a post-translocation (POST) complex to a pre-translocation (PRE) complex, thus giving elongation factor G a second chance to translocate the tRNAs correctly. Binds to ribosomes in a GTP-dependent manner. In Brucella anthropi (strain ATCC 49188 / DSM 6882 / CCUG 24695 / JCM 21032 / LMG 3331 / NBRC 15819 / NCTC 12168 / Alc 37) (Ochrobactrum anthropi), this protein is Elongation factor 4.